The following is a 619-amino-acid chain: Kinesin light chain 4 (619 aa).

Ser-2 carries the N-acetylserine modification. The TPR 1 repeat unit spans residues 55 to 88 (QQGGHEEGLVHEKARQLRRSMENIELGLSEAQVM). A coiled-coil region spans residues 65–155 (HEKARQLRRS…HLEFLRQLRQ (91 aa)). Residues 156 to 175 (YDEDGHGMEEKEGEATKDSL) are compositionally biased toward basic and acidic residues. A disordered region spans residues 156–199 (YDEDGHGMEEKEGEATKDSLDDLFPNEEEEDSGNDLSRGQGAAA). Ser-174 bears the Phosphoserine mark. Positions 179-188 (FPNEEEEDSG) are enriched in acidic residues. TPR repeat units lie at residues 211–244 (LRTLHNLVIQYAAQGRYEVAVPLCKQALEDLERT), 253–286 (ATMLNILALVYRDQNKYKEAAHLLNDALSIREST), 295–328 (AATLNNLAVLYGKRGKYKEAEPLCQRALEIREKV), 337–370 (AKQLNNLALLCQNQGKYEAVERYYQRALAIYESQ), and 379–412 (ARTKNNLASCYLKQGKYSEAEALYKEILTCAHVQ). At Ser-460 the chain carries Phosphoserine. The TPR 7 repeat unit spans residues 464-497 (NTTLKNLGALYRRQGKLEAAETLEECALRSRKQG). Ser-565, Ser-566, and Ser-590 each carry phosphoserine. The tract at residues 571 to 619 (RKLQGTEPRPSSSSMKRAASLNYLNQPNAAPLQVSRGLSASTVDLSSSS) is disordered. The span at 609–619 (SASTVDLSSSS) shows a compositional bias: low complexity. A Phosphothreonine modification is found at Thr-612.

The protein belongs to the kinesin light chain family. As to quaternary structure, oligomeric complex composed of two heavy chains and two light chains.

It is found in the cytoplasm. It localises to the cytoskeleton. Functionally, kinesin is a microtubule-associated force-producing protein that may play a role in organelle transport. The light chain may function in coupling of cargo to the heavy chain or in the modulation of its ATPase activity. This Mus musculus (Mouse) protein is Kinesin light chain 4 (Klc4).